The sequence spans 446 residues: Tubulin beta-8 chain (446 aa).

Residues Q11, E69, S138, G142, T143, G144, N204, and N226 each contribute to the GTP site. E69 contributes to the Mg(2+) binding site. Positions 426–446 (QDATAEDDYDEDDDAAAADEA) are disordered. The span at 429 to 446 (TAEDDYDEDDDAAAADEA) shows a compositional bias: acidic residues.

Belongs to the tubulin family. Dimer of alpha and beta chains. A typical microtubule is a hollow water-filled tube with an outer diameter of 25 nm and an inner diameter of 15 nM. Alpha-beta heterodimers associate head-to-tail to form protofilaments running lengthwise along the microtubule wall with the beta-tubulin subunit facing the microtubule plus end conferring a structural polarity. Microtubules usually have 13 protofilaments but different protofilament numbers can be found in some organisms and specialized cells. Mg(2+) is required as a cofactor. Expressed in anthers.

Its subcellular location is the cytoplasm. It is found in the cytoskeleton. Functionally, tubulin is the major constituent of microtubules, a cylinder consisting of laterally associated linear protofilaments composed of alpha- and beta-tubulin heterodimers. Microtubules grow by the addition of GTP-tubulin dimers to the microtubule end, where a stabilizing cap forms. Below the cap, tubulin dimers are in GDP-bound state, owing to GTPase activity of alpha-tubulin. This Oryza sativa subsp. japonica (Rice) protein is Tubulin beta-8 chain (TUBB8).